Here is a 348-residue protein sequence, read N- to C-terminus: UPF0283 membrane protein PMI1371 (348 aa).

2 helical membrane-spanning segments follow: residues L69–I89 and I99–I119.

The protein belongs to the UPF0283 family.

The protein resides in the cell inner membrane. This is UPF0283 membrane protein PMI1371 from Proteus mirabilis (strain HI4320).